We begin with the raw amino-acid sequence, 61 residues long: Probable tautomerase lin2709 (61 aa).

Proline 2 functions as the Proton acceptor; via imino nitrogen in the catalytic mechanism.

Belongs to the 4-oxalocrotonate tautomerase family.

This Listeria innocua serovar 6a (strain ATCC BAA-680 / CLIP 11262) protein is Probable tautomerase lin2709.